A 450-amino-acid polypeptide reads, in one-letter code: Tubulin beta-2 chain (450 aa).

The GTP site is built by glutamine 11, glutamate 69, serine 138, glycine 142, threonine 143, glycine 144, asparagine 204, and asparagine 226. Residue glutamate 69 coordinates Mg(2+). The disordered stretch occupies residues alanine 428–glutamine 450. Residues threonine 429–glutamine 450 are compositionally biased toward acidic residues.

Belongs to the tubulin family. As to quaternary structure, dimer of alpha and beta chains. A typical microtubule is a hollow water-filled tube with an outer diameter of 25 nm and an inner diameter of 15 nm. Alpha-beta heterodimers associate head-to-tail to form protofilaments running lengthwise along the microtubule wall with the beta-tubulin subunit facing the microtubule plus end conferring a structural polarity. Microtubules usually have 13 protofilaments but different protofilament numbers can be found in some organisms and specialized cells. Mg(2+) is required as a cofactor. Cleaved by caspase ced-3 in vitro.

The protein localises to the cytoplasm. It is found in the cytoskeleton. Its function is as follows. Tubulin is the major constituent of microtubules, a cylinder consisting of laterally associated linear protofilaments composed of alpha- and beta-tubulin heterodimers. Microtubules grow by the addition of GTP-tubulin dimers to the microtubule end, where a stabilizing cap forms. Below the cap, tubulin dimers are in GDP-bound state, owing to GTPase activity of alpha-tubulin. Required for the normal dynamic behavior of the non-centrosomal microtubules in the epidermal syncytium. Involved in the redistribution of microtubule end-binding protein EB1/ebp-2 caused by wounding. Required to modulate expression in the epidermis of antimicrobial peptides, such as nlp-29, after wounding, or fungal infection. This is Tubulin beta-2 chain (tbb-2) from Caenorhabditis elegans.